The primary structure comprises 357 residues: Dihydroorotate dehydrogenase (quinone) (357 aa).

Residues 65–69 (AGLDK) and T89 each bind FMN. K69 is a substrate binding site. Residue 114–118 (NRFGF) participates in substrate binding. FMN-binding residues include N156 and N189. Substrate is bound at residue N189. S192 acts as the Nucleophile in catalysis. Residue N194 coordinates substrate. Positions 234 and 262 each coordinate FMN. Residue 263 to 264 (NT) coordinates substrate. Residues G285, G314, and 335–336 (YT) each bind FMN.

This sequence belongs to the dihydroorotate dehydrogenase family. Type 2 subfamily. As to quaternary structure, monomer. The cofactor is FMN.

It localises to the cell membrane. The enzyme catalyses (S)-dihydroorotate + a quinone = orotate + a quinol. It functions in the pathway pyrimidine metabolism; UMP biosynthesis via de novo pathway; orotate from (S)-dihydroorotate (quinone route): step 1/1. In terms of biological role, catalyzes the conversion of dihydroorotate to orotate with quinone as electron acceptor. The sequence is that of Dihydroorotate dehydrogenase (quinone) from Albidiferax ferrireducens (strain ATCC BAA-621 / DSM 15236 / T118) (Rhodoferax ferrireducens).